The primary structure comprises 186 residues: Protein GrpE (186 aa).

This sequence belongs to the GrpE family. Homodimer.

It is found in the cytoplasm. Its function is as follows. Participates actively in the response to hyperosmotic and heat shock by preventing the aggregation of stress-denatured proteins, in association with DnaK and GrpE. It is the nucleotide exchange factor for DnaK and may function as a thermosensor. Unfolded proteins bind initially to DnaJ; upon interaction with the DnaJ-bound protein, DnaK hydrolyzes its bound ATP, resulting in the formation of a stable complex. GrpE releases ADP from DnaK; ATP binding to DnaK triggers the release of the substrate protein, thus completing the reaction cycle. Several rounds of ATP-dependent interactions between DnaJ, DnaK and GrpE are required for fully efficient folding. In Novosphingobium aromaticivorans (strain ATCC 700278 / DSM 12444 / CCUG 56034 / CIP 105152 / NBRC 16084 / F199), this protein is Protein GrpE.